The primary structure comprises 287 residues: Glycine--tRNA ligase alpha subunit (287 aa).

It belongs to the class-II aminoacyl-tRNA synthetase family. In terms of assembly, tetramer of two alpha and two beta subunits.

The protein localises to the cytoplasm. The catalysed reaction is tRNA(Gly) + glycine + ATP = glycyl-tRNA(Gly) + AMP + diphosphate. The protein is Glycine--tRNA ligase alpha subunit of Campylobacter jejuni subsp. jejuni serotype O:23/36 (strain 81-176).